A 981-amino-acid polypeptide reads, in one-letter code: Rab3 GTPase-activating protein catalytic subunit (981 aa).

Phosphoserine occurs at positions 83, 379, 537, 579, 581, and 590. The tract at residues 592-613 (TEELKGNGQESGKKGGPKEMAN) is disordered. Residue Ser-664 is modified to Phosphoserine. Thr-908 is modified (phosphothreonine). Residues 908 to 937 (TPPEEELKRMGSPEERRQNSVSDFPPPAGR) form a disordered region. Over residues 912–925 (EELKRMGSPEERRQ) the composition is skewed to basic and acidic residues.

Belongs to the Rab3-GAP catalytic subunit family. The Rab3 GTPase-activating complex is a heterodimer composed of RAB3GAP1 and RAB3GAP2. The Rab3 GTPase-activating complex interacts with DMXL2. Interacts with LMAN1. In terms of tissue distribution, ubiquitous.

Its subcellular location is the cytoplasm. The protein resides in the endoplasmic reticulum. It localises to the golgi apparatus. The protein localises to the cis-Golgi network. Its function is as follows. Catalytic subunit of the Rab3 GTPase-activating (Rab3GAP) complex composed of RAB3GAP1 and RAB3GAP2, which has GTPase-activating protein (GAP) activity towards various Rab3 subfamily members (RAB3A, RAB3B, RAB3C and RAB3D), RAB5A and RAB43, and guanine nucleotide exchange factor (GEF) activity towards RAB18. As part of the Rab3GAP complex, acts as a GAP for Rab3 proteins by converting active RAB3-GTP to the inactive form RAB3-GDP. Rab3 proteins are involved in regulated exocytosis of neurotransmitters and hormones. The Rab3GAP complex, acts as a GEF for RAB18 by promoting the conversion of inactive RAB18-GDP to the active form RAB18-GTP. Recruits and stabilizes RAB18 at the cis-Golgi membrane in fibroblasts where RAB18 is most likely activated. Also involved in RAB18 recruitment at the endoplasmic reticulum (ER) membrane where it maintains proper ER structure. Required for normal eye and brain development. May participate in neurodevelopmental processes such as proliferation, migration and differentiation before synapse formation, and non-synaptic vesicular release of neurotransmitters. The chain is Rab3 GTPase-activating protein catalytic subunit from Homo sapiens (Human).